Consider the following 471-residue polypeptide: Protein naked cuticle homolog 1 (471 aa).

2 disordered regions span residues 1-23 (MGKL…GDSF) and 41-82 (QRCP…DEDD). A lipid anchor (N-myristoyl glycine) is attached at Gly-2. The span at 62–75 (GTRELVGDTSREAL) shows a compositional bias: basic and acidic residues. The interaction with DVL1, DVL2 and DVL3 stretch occupies residues 125-190 (QCDVSVEEDS…LRVKLTVAPD (66 aa)). One can recognise an EF-hand domain in the interval 131-166 (EEDSRQEWTFTLYDFDNNGKVTREDITSLLHTIYEV). Asp-144, Asp-146, Asn-148, Lys-150, and Asp-155 together coordinate Ca(2+). 3 disordered regions span residues 273–314 (GPGS…QGVD), 337–382 (GTQD…SPSA), and 448–471 (QAVQ…FYQP). Over residues 453–471 (HEHHHHHEHHHHYHHFYQP) the composition is skewed to basic residues.

It belongs to the NKD family. In terms of assembly, interacts with DVL1, DVL2, DVL3 and PPP2R3A. As to expression, highly expressed in lung. Also expressed in brain, heart, kidney, liver, skin, stomach and testis. Within the testis expression is found in the seminiferous epithelium and round and elongating spermatids.

It is found in the cell membrane. The protein resides in the cytoplasm. Cell autonomous antagonist of the canonical Wnt signaling pathway. May activate a second Wnt signaling pathway that controls planar cell polarity. Required for spermatogenesis. The protein is Protein naked cuticle homolog 1 (Nkd1) of Mus musculus (Mouse).